The following is a 229-amino-acid chain: Translation initiation factor IF-3 (229 aa).

Disordered stretches follow at residues 1 to 21 and 184 to 229; these read MAIQQRDSRGGTNRDARTNRR and QAQR…AGPR. The span at 192–203 shows a compositional bias: low complexity; it reads AAAQAAPAAAPQ. Positions 204–221 are enriched in pro residues; it reads PGAPAAPPAAPAPAPAPE.

Belongs to the IF-3 family. As to quaternary structure, monomer.

It is found in the cytoplasm. IF-3 binds to the 30S ribosomal subunit and shifts the equilibrium between 70S ribosomes and their 50S and 30S subunits in favor of the free subunits, thus enhancing the availability of 30S subunits on which protein synthesis initiation begins. This is Translation initiation factor IF-3 from Anaeromyxobacter sp. (strain Fw109-5).